Consider the following 314-residue polypeptide: Transcription factor TCP20 (314 aa).

Disordered stretches follow at residues 1-91 and 295-314; these read MDPK…RGRR and NHEEHQQESGEKDDSQGSGR. 2 stretches are compositionally biased toward basic and acidic residues: residues 38–49 and 77–89; these read DENRKPTTEIKD and SNKDRHTKVEGRG. The 55-residue stretch at 78-132 folds into the TCP domain; the sequence is NKDRHTKVEGRGRRIRMPALCAARIFQLTRELGHKSDGETIQWLLQQAEPSIIAA.

Interacts with PURA1. Interacts with SPL.

The protein localises to the nucleus. Its function is as follows. Transcription factor that binds to the site II motif (3'-TGGGCC/T-5') in the promoter of PCNA-2 and to 3'-GCCCG/A-5' elements in the promoters of cyclin CYCB1-1 and ribosomal protein genes. The sequence is that of Transcription factor TCP20 (TCP20) from Arabidopsis thaliana (Mouse-ear cress).